The chain runs to 446 residues: Immunoglobulin heavy constant gamma 3 (446 aa).

The interval 1–98 (ASTKGPSVFP…PSNTKVDKRV (98 aa)) is CH1. Residues 1–397 (ASTKGPSVFP…DGELDGLWTT (397 aa)) are Extracellular-facing. One can recognise an Ig-like 1 domain in the interval 6–99 (PSVFPLAPCS…SNTKVDKRVE (94 aa)). Cys-27 and Cys-83 are oxidised to a cystine. Residues 99 to 160 (ELKTPLGDTT…DTPPPCPRCP (62 aa)) are hinge. 3 repeats span residues 116-130 (EPKS…PRCP), 131-145 (EPKS…PRCP), and 146-160 (EPKS…PRCP). Thr-122, Thr-137, and Thr-152 each carry an O-linked (GalNAc...) threonine glycan. Residues 161–270 (APELLGGPSV…PIEKTISKTK (110 aa)) form a CH2 region. Ig-like domains are found at residues 168-267 (PSVF…KTIS) and 276-372 (PQVY…KSLS). Intrachain disulfides connect Cys-191-Cys-251 and Cys-297-Cys-355. Residues Asn-227 and Asn-322 are each glycosylated (N-linked (GlcNAc...) asparagine). The segment at 271–376 (GQPREPQVYT…TQKSLSLSPE (106 aa)) is CH3. Residues 398 to 418 (ITIFITLFLLSVCYSATVTFF) traverse the membrane as a helical segment. The Cytoplasmic portion of the chain corresponds to 419–446 (KVKWIFSSVVDLKQTIIPDYRNMIGQGA).

Immunoglobulins are composed of two identical heavy chains and two identical light chains; disulfide-linked. N-linked glycans at Asn-322 are noncore fucosylated and the vast majority are diantennary species with a bisecting GlcNAc. Among them the most dominant glycans are HexNAc5Hex4, HexNAc5Hex5, and HexNAc5Hex5Sia1. Post-translationally, N-linked glycans at Asn-227 are diantennary core fucosylated structures without bisecting GlcNAc (HexNAc4Hex4Fuc1, HexNAc4Hex5Fuc1, and HexNAc4Hex5Fuc1Sia1). Glycosylation on Asn-227 is required for interaction with Fc receptors and ability to activate the complement pathway. In terms of processing, (Microbial infection) Deglycosylation on Asn-227 by S.pyogenes EndoS or Endos2 endoglucosidases prevents interaction between immunoglobulin-gamma (IgG) and Fc receptors, impairing ability to activate the complement pathway. O-linked glycans are non-, mono- and disialylated core 1-type O-glycans.

It localises to the secreted. It is found in the cell membrane. Its function is as follows. Constant region of immunoglobulin heavy chains. Immunoglobulins, also known as antibodies, are membrane-bound or secreted glycoproteins produced by B lymphocytes. In the recognition phase of humoral immunity, the membrane-bound immunoglobulins serve as receptors which, upon binding of a specific antigen, trigger the clonal expansion and differentiation of B lymphocytes into immunoglobulins-secreting plasma cells. Secreted immunoglobulins mediate the effector phase of humoral immunity, which results in the elimination of bound antigens. The antigen binding site is formed by the variable domain of one heavy chain, together with that of its associated light chain. Thus, each immunoglobulin has two antigen binding sites with remarkable affinity for a particular antigen. The variable domains are assembled by a process called V-(D)-J rearrangement and can then be subjected to somatic hypermutations which, after exposure to antigen and selection, allow affinity maturation for a particular antigen. The chain is Immunoglobulin heavy constant gamma 3 from Homo sapiens (Human).